We begin with the raw amino-acid sequence, 286 residues long: S-adenosylmethionine-dependent methyltransferase UmaA (286 aa).

Residues 32–33 (YT), 67–75 (LLDIGCGWG), 93–98 (TLSRNQ), and 122–123 (WD) each bind S-adenosyl-L-methionine. The active site involves cysteine 268.

This sequence belongs to the CFA/CMAS family.

It is found in the cytoplasm. In terms of biological role, methyltransferase that modifies short-chain fatty acids. In vitro, catalyzes the transfer of the methyl group from S-adenosyl-L-methionine (SAM) to the double bond of phospholipid-linked oleic acid to produce tuberculostearic acid (10-methylstearic-acid or TSA). The sequence is that of S-adenosylmethionine-dependent methyltransferase UmaA from Mycobacterium tuberculosis (strain ATCC 25618 / H37Rv).